The sequence spans 553 residues: Probable malate:quinone oxidoreductase (553 aa).

Low complexity predominate over residues Gln534 to Pro543. A disordered region spans residues Gln534–Leu553.

It belongs to the MQO family. FAD is required as a cofactor.

The enzyme catalyses (S)-malate + a quinone = a quinol + oxaloacetate. The protein operates within carbohydrate metabolism; tricarboxylic acid cycle; oxaloacetate from (S)-malate (quinone route): step 1/1. In Citrobacter koseri (strain ATCC BAA-895 / CDC 4225-83 / SGSC4696), this protein is Probable malate:quinone oxidoreductase.